Reading from the N-terminus, the 484-residue chain is Glutamyl-tRNA(Gln) amidotransferase subunit A (484 aa).

Active-site charge relay system residues include Lys76 and Ser151. Catalysis depends on Ser175, which acts as the Acyl-ester intermediate.

This sequence belongs to the amidase family. GatA subfamily. As to quaternary structure, heterotrimer of A, B and C subunits.

It carries out the reaction L-glutamyl-tRNA(Gln) + L-glutamine + ATP + H2O = L-glutaminyl-tRNA(Gln) + L-glutamate + ADP + phosphate + H(+). Its function is as follows. Allows the formation of correctly charged Gln-tRNA(Gln) through the transamidation of misacylated Glu-tRNA(Gln) in organisms which lack glutaminyl-tRNA synthetase. The reaction takes place in the presence of glutamine and ATP through an activated gamma-phospho-Glu-tRNA(Gln). The polypeptide is Glutamyl-tRNA(Gln) amidotransferase subunit A (Saccharophagus degradans (strain 2-40 / ATCC 43961 / DSM 17024)).